Reading from the N-terminus, the 270-residue chain is Glutamate racemase (270 aa).

Residues 10-11 (DS) and 42-43 (YG) each bind substrate. Cys74 functions as the Proton donor/acceptor in the catalytic mechanism. 75 to 76 (NT) serves as a coordination point for substrate. The active-site Proton donor/acceptor is Cys189. 190 to 191 (TH) lines the substrate pocket.

The protein belongs to the aspartate/glutamate racemases family.

The enzyme catalyses L-glutamate = D-glutamate. It participates in cell wall biogenesis; peptidoglycan biosynthesis. Provides the (R)-glutamate required for cell wall biosynthesis. The polypeptide is Glutamate racemase (Bartonella henselae (strain ATCC 49882 / DSM 28221 / CCUG 30454 / Houston 1) (Rochalimaea henselae)).